Here is a 209-residue protein sequence, read N- to C-terminus: Imidazole glycerol phosphate synthase subunit HisH (209 aa).

Residues 4–209 (PVVVFEYGSG…RLLANWIGSL (206 aa)) form the Glutamine amidotransferase type-1 domain. Catalysis depends on Cys82, which acts as the Nucleophile. Catalysis depends on residues His190 and Glu192.

As to quaternary structure, heterodimer of HisH and HisF.

Its subcellular location is the cytoplasm. It carries out the reaction 5-[(5-phospho-1-deoxy-D-ribulos-1-ylimino)methylamino]-1-(5-phospho-beta-D-ribosyl)imidazole-4-carboxamide + L-glutamine = D-erythro-1-(imidazol-4-yl)glycerol 3-phosphate + 5-amino-1-(5-phospho-beta-D-ribosyl)imidazole-4-carboxamide + L-glutamate + H(+). It catalyses the reaction L-glutamine + H2O = L-glutamate + NH4(+). Its pathway is amino-acid biosynthesis; L-histidine biosynthesis; L-histidine from 5-phospho-alpha-D-ribose 1-diphosphate: step 5/9. Functionally, IGPS catalyzes the conversion of PRFAR and glutamine to IGP, AICAR and glutamate. The HisH subunit catalyzes the hydrolysis of glutamine to glutamate and ammonia as part of the synthesis of IGP and AICAR. The resulting ammonia molecule is channeled to the active site of HisF. This chain is Imidazole glycerol phosphate synthase subunit HisH, found in Leifsonia xyli subsp. xyli (strain CTCB07).